Reading from the N-terminus, the 168-residue chain is Phosphopantetheine adenylyltransferase (168 aa).

Threonine 10 is a binding site for substrate. ATP is bound by residues 10–11 and histidine 18; that span reads TF. Positions 42, 74, and 88 each coordinate substrate. Residues 89–91, glutamate 99, and 124–130 each bind ATP; these read GLR and NSFISST.

It belongs to the bacterial CoaD family. Homohexamer. Mg(2+) is required as a cofactor.

Its subcellular location is the cytoplasm. It catalyses the reaction (R)-4'-phosphopantetheine + ATP + H(+) = 3'-dephospho-CoA + diphosphate. It functions in the pathway cofactor biosynthesis; coenzyme A biosynthesis; CoA from (R)-pantothenate: step 4/5. Reversibly transfers an adenylyl group from ATP to 4'-phosphopantetheine, yielding dephospho-CoA (dPCoA) and pyrophosphate. This Shewanella denitrificans (strain OS217 / ATCC BAA-1090 / DSM 15013) protein is Phosphopantetheine adenylyltransferase.